An 80-amino-acid polypeptide reads, in one-letter code: Conotoxin Vi6.2 (80 aa).

The signal sequence occupies residues 1–22; it reads MKLTCVLITTVLFLTASQLITA. Positions 23–47 are excised as a propeptide; the sequence is DYSRDKRQYRAVRLRDEMRNFKGAR. Cystine bridges form between cysteine 49–cysteine 62, cysteine 56–cysteine 67, and cysteine 61–cysteine 77. 4-hydroxyproline is present on residues proline 60 and proline 63.

This sequence belongs to the conotoxin O1 superfamily. Expressed by the venom duct.

The protein resides in the secreted. Ion channel inhibitor that inhibits the increase in intracellular calcium upon depolarization in DRG neurons. In vivo, both intraperitoneal and intracranial injections into mice induce hyperactivity. The polypeptide is Conotoxin Vi6.2 (Conus virgo (Virgin cone)).